Here is a 74-residue protein sequence, read N- to C-terminus: Probable tetrachloroethene reductive dehalogenase membrane anchor protein (74 aa).

Helical transmembrane passes span 11–31 (ALGLSLLYLALILVTFQISMG) and 40–60 (AGSILMVAGLIFSIIGVFLLM).

The protein belongs to the PceB family.

The protein localises to the cell inner membrane. Functionally, may act as a membrane anchor for the tetrachloroethene reductive dehalogenase PceA. The chain is Probable tetrachloroethene reductive dehalogenase membrane anchor protein from Sulfurospirillum multivorans (Dehalospirillum multivorans).